We begin with the raw amino-acid sequence, 461 residues long: Phosphomethylpyrimidine synthase (461 aa).

Substrate contacts are provided by residues asparagine 80, methionine 109, tyrosine 139, histidine 175, 195-197, 236-239, and glutamate 275; these read SRG and DSLR. Histidine 279 provides a ligand contact to Zn(2+). Tyrosine 302 lines the substrate pocket. Histidine 343 is a binding site for Zn(2+). Positions 423, 426, and 431 each coordinate [4Fe-4S] cluster.

It belongs to the ThiC family. It depends on [4Fe-4S] cluster as a cofactor.

The enzyme catalyses 5-amino-1-(5-phospho-beta-D-ribosyl)imidazole + S-adenosyl-L-methionine = 4-amino-2-methyl-5-(phosphooxymethyl)pyrimidine + CO + 5'-deoxyadenosine + formate + L-methionine + 3 H(+). The protein operates within cofactor biosynthesis; thiamine diphosphate biosynthesis. Catalyzes the synthesis of the hydroxymethylpyrimidine phosphate (HMP-P) moiety of thiamine from aminoimidazole ribotide (AIR) in a radical S-adenosyl-L-methionine (SAM)-dependent reaction. This is Phosphomethylpyrimidine synthase from Picosynechococcus sp. (strain ATCC 27264 / PCC 7002 / PR-6) (Agmenellum quadruplicatum).